Consider the following 490-residue polypeptide: Glutamate--tRNA ligase (490 aa).

Residues 12-22 (PSPTGTPHVGL) carry the 'HIGH' region motif. A 'KMSKS' region motif is present at residues 256–260 (KLSKR). Lys-259 is an ATP binding site.

Belongs to the class-I aminoacyl-tRNA synthetase family. Glutamate--tRNA ligase type 1 subfamily. In terms of assembly, monomer.

The protein resides in the cytoplasm. The enzyme catalyses tRNA(Glu) + L-glutamate + ATP = L-glutamyl-tRNA(Glu) + AMP + diphosphate. Catalyzes the attachment of glutamate to tRNA(Glu) in a two-step reaction: glutamate is first activated by ATP to form Glu-AMP and then transferred to the acceptor end of tRNA(Glu). The protein is Glutamate--tRNA ligase of Mycobacterium sp. (strain KMS).